The sequence spans 304 residues: Acetylglutamate kinase (304 aa).

Substrate contacts are provided by residues 75–76 (GG), arginine 97, and asparagine 202.

This sequence belongs to the acetylglutamate kinase family. ArgB subfamily.

It is found in the cytoplasm. The enzyme catalyses N-acetyl-L-glutamate + ATP = N-acetyl-L-glutamyl 5-phosphate + ADP. Its pathway is amino-acid biosynthesis; L-arginine biosynthesis; N(2)-acetyl-L-ornithine from L-glutamate: step 2/4. Its function is as follows. Catalyzes the ATP-dependent phosphorylation of N-acetyl-L-glutamate. The polypeptide is Acetylglutamate kinase (Parvibaculum lavamentivorans (strain DS-1 / DSM 13023 / NCIMB 13966)).